The chain runs to 159 residues: Cytochrome c-type biogenesis protein CcmE (159 aa).

The Cytoplasmic portion of the chain corresponds to 1 to 8 (MNIRRKNR). The helical; Signal-anchor for type II membrane protein transmembrane segment at 9 to 29 (LWIACAVLAGLALTITLVLYA) threads the bilayer. Topologically, residues 30–159 (LRSNIDLFYT…PESVYKDKAS (130 aa)) are periplasmic. Heme contacts are provided by His130 and Tyr134. The tract at residues 130 to 159 (HDENYTPPEVEKAMQENHRRPESVYKDKAS) is disordered.

The protein belongs to the CcmE/CycJ family.

It is found in the cell inner membrane. Its function is as follows. Heme chaperone required for the biogenesis of c-type cytochromes. Transiently binds heme delivered by CcmC and transfers the heme to apo-cytochromes in a process facilitated by CcmF and CcmH. The sequence is that of Cytochrome c-type biogenesis protein CcmE from Citrobacter koseri (strain ATCC BAA-895 / CDC 4225-83 / SGSC4696).